The following is a 481-amino-acid chain: E3 ubiquitin-protein ligase makorin-1 (481 aa).

C3H1-type zinc fingers lie at residues 55–82 (WTKQVTCRYFMHGVCKEGDNCRYSHDLS), 84–111 (SPYGVVCKYFQRGYCVYGDRCRYEHSKP), and 208–235 (ETKKQLCPYAAVGECRYGENCVYLHGDS). Positions 236 to 263 (CDMCGLQVLHPVDAAQRSQHIKSCIEAH) are makorin-type Cys-His. The segment at 281-335 (CGICMEVVYEKANPSERRFGILSNCNHTYCLKCIRKWRSAKQFESKIIKSCPECR) adopts an RING-type zinc-finger fold. A C3H1-type 4 zinc finger spans residues 364–393 (AMSNKACRYFDEGRGSCPFGGNCFYKHAYP).

Interacts with p53/TP53 and CDKN1A. Interacts with TERT, modulating telomere length homeostasis. In terms of processing, auto-ubiquitinated; which leads to proteasomal degradation. As to expression, highly expressed in embryo, in specific cell types of the central nervous system, in brain with the strongest levels of expression in the mantle layers and in testis. Moderate to low levels in somatic tissues.

The catalysed reaction is S-ubiquitinyl-[E2 ubiquitin-conjugating enzyme]-L-cysteine + [acceptor protein]-L-lysine = [E2 ubiquitin-conjugating enzyme]-L-cysteine + N(6)-ubiquitinyl-[acceptor protein]-L-lysine.. It functions in the pathway protein modification; protein ubiquitination. Functionally, E3 ubiquitin ligase catalyzing the covalent attachment of ubiquitin moieties onto substrate proteins. These substrates include FILIP1, p53/TP53, CDKN1A and TERT. Keeps cells alive by suppressing p53/TP53 under normal conditions, but stimulates apoptosis by repressing CDKN1A under stress conditions. Acts as a negative regulator of telomerase. Has negative and positive effects on RNA polymerase II-dependent transcription. This Mus musculus (Mouse) protein is E3 ubiquitin-protein ligase makorin-1 (Mkrn1).